A 51-amino-acid chain; its full sequence is Large ribosomal subunit protein eL40 (51 aa).

Zn(2+) contacts are provided by Cys-17, Cys-20, Cys-31, and Cys-34.

This sequence belongs to the eukaryotic ribosomal protein eL40 family. As to quaternary structure, part of the 50S ribosomal subunit. Zn(2+) is required as a cofactor.

This Thermococcus kodakarensis (strain ATCC BAA-918 / JCM 12380 / KOD1) (Pyrococcus kodakaraensis (strain KOD1)) protein is Large ribosomal subunit protein eL40.